The primary structure comprises 245 residues: Orotidine 5'-phosphate decarboxylase (245 aa).

Substrate is bound by residues aspartate 22, lysine 44, aspartate 71 to threonine 80, threonine 131, arginine 192, glutamine 201, glycine 221, and arginine 222. Lysine 73 functions as the Proton donor in the catalytic mechanism.

This sequence belongs to the OMP decarboxylase family. Type 1 subfamily. Homodimer.

It catalyses the reaction orotidine 5'-phosphate + H(+) = UMP + CO2. Its pathway is pyrimidine metabolism; UMP biosynthesis via de novo pathway; UMP from orotate: step 2/2. In terms of biological role, catalyzes the decarboxylation of orotidine 5'-monophosphate (OMP) to uridine 5'-monophosphate (UMP). The sequence is that of Orotidine 5'-phosphate decarboxylase from Salmonella newport (strain SL254).